A 913-amino-acid chain; its full sequence is Alanine--tRNA ligase (913 aa).

Zn(2+) contacts are provided by histidine 600, histidine 604, cysteine 703, and histidine 707.

This sequence belongs to the class-II aminoacyl-tRNA synthetase family. It depends on Zn(2+) as a cofactor.

Its subcellular location is the cytoplasm. The enzyme catalyses tRNA(Ala) + L-alanine + ATP = L-alanyl-tRNA(Ala) + AMP + diphosphate. Catalyzes the attachment of alanine to tRNA(Ala) in a two-step reaction: alanine is first activated by ATP to form Ala-AMP and then transferred to the acceptor end of tRNA(Ala). Also edits incorrectly charged Ser-tRNA(Ala) and Gly-tRNA(Ala) via its editing domain. This chain is Alanine--tRNA ligase, found in Methanothrix thermoacetophila (strain DSM 6194 / JCM 14653 / NBRC 101360 / PT) (Methanosaeta thermophila).